The chain runs to 447 residues: RNA-binding protein 208 (447 aa).

2 consecutive RRM domains span residues 73–147 (RSVY…WAYA) and 158–236 (FHIF…WATK). The segment covering 254–269 (TNGSSSNPGMEASQDT) has biased composition (polar residues). Disordered regions lie at residues 254–279 (TNGS…ENNP) and 353–372 (WGNK…PPLP). The RRM 3 domain occupies 282–356 (TTVYVGNLGH…KPIKCSWGNK (75 aa)).

As to quaternary structure, interacts with RBP-P.

Functionally, RNA-binding protein. The chain is RNA-binding protein 208 from Oryza sativa subsp. japonica (Rice).